Reading from the N-terminus, the 347-residue chain is D-alanine--D-alanine ligase (347 aa).

Positions 134 to 332 constitute an ATP-grasp domain; sequence KLYAKDLGIK…LAQSLPKTPK (199 aa). Residue 161–216 participates in ATP binding; the sequence is LINFNFPFIIKPNSAGSSLGVSVVKEEKELNYALDSAFEYSKEVLIEPFIQGVKEY. Residues aspartate 288, glutamate 300, and asparagine 302 each coordinate Mg(2+).

Belongs to the D-alanine--D-alanine ligase family. Requires Mg(2+) as cofactor. It depends on Mn(2+) as a cofactor.

The protein localises to the cytoplasm. The enzyme catalyses 2 D-alanine + ATP = D-alanyl-D-alanine + ADP + phosphate + H(+). It functions in the pathway cell wall biogenesis; peptidoglycan biosynthesis. Its function is as follows. Cell wall formation. The sequence is that of D-alanine--D-alanine ligase from Helicobacter pylori (strain HPAG1).